The chain runs to 91 residues: Cell division protein FtsB (91 aa).

Topologically, residues 1–3 (MRW) are cytoplasmic. The chain crosses the membrane as a helical span at residues 4 to 21 (PVIILAVLVVVLQYPLWL). The Periplasmic portion of the chain corresponds to 22-91 (GKGGWLRVWE…EIFVQVPQKH (70 aa)). A coiled-coil region spans residues 28-72 (RVWEVDRKLHEQREENTRLEERNAGLDAEVRDLKSGNEAIEERAR).

This sequence belongs to the FtsB family. In terms of assembly, part of a complex composed of FtsB, FtsL and FtsQ.

The protein resides in the cell inner membrane. Its function is as follows. Essential cell division protein. May link together the upstream cell division proteins, which are predominantly cytoplasmic, with the downstream cell division proteins, which are predominantly periplasmic. This is Cell division protein FtsB from Azoarcus sp. (strain BH72).